A 342-amino-acid chain; its full sequence is Prenyl transferase ptmC (342 aa).

Residues Leu17–Ile37 form a helical membrane-spanning segment. His110 lines the isopentenyl diphosphate pocket. The Mg(2+) site is built by Asp117 and Asp121. A dimethylallyl diphosphate-binding site is contributed by Arg126. The N-linked (GlcNAc...) asparagine glycan is linked to Asn154. Dimethylallyl diphosphate is bound by residues Lys210, Thr211, Gln240, Asn247, and Lys257.

It belongs to the FPP/GGPP synthase family.

It is found in the membrane. Its pathway is secondary metabolite biosynthesis. Prenyl transferase; part of the gene cluster that mediates the biosynthesis of the indole diterpenes penitrems. The geranylgeranyl diphosphate (GGPP) synthase ptmG catalyzes the first step in penitrem biosynthesis via conversion of farnesyl pyrophosphate and isopentyl pyrophosphate into geranylgeranyl pyrophosphate (GGPP). Condensation of indole-3-glycerol phosphate with GGPP by the prenyl transferase ptmC then forms 3-geranylgeranylindole (3-GGI). Epoxidation by the FAD-dependent monooxygenase ptmM leads to a epoxidized-GGI that is substrate of the terpene cyclase ptmB for cyclization to yield paspaline. Paspaline is subsequently converted to 13-desoxypaxilline by the cytochrome P450 monooxygenase ptmP, the latter being then converted to paxilline by the cytochrome P450 monooxygenase ptmQ. Paxilline is converted to beta-paxitriol via C-10 ketoreduction by the short-chain dehydrogenase ptmH which can be monoprenylated at the C-20 by the indole diterpene prenyltransferase ptmD. A two-step elimination (acetylation and elimination) process performed by the O-acetyltransferase ptmV and ptmI leads to the production of the prenylated form of penijanthine. The FAD-linked oxidoreductase ptmO then converts the prenylated form of penijanthine into PC-M5 which is in turn transformed into PC-M4 by the aromatic dimethylallyltransferase ptmE. Five sequential oxidative transformations performed by the cytochrome P450 monooxygenases ptmK, ptmU, ptmL, ptmN and ptmJ yield the various penitrem compounds. PtmK, ptmU and ptmM are involved in the formation of the key bicyclic ring of penitrem C via the formation of the intermediates secopenitrem D and penitrem D. PtmL catalyzes the epoxidation of penitrem D and C to yield penitrem B and F, respectively. PtmJ catalyzes the last benzylic hydroxylation to convert penitrem B to prenitrem E and penitrem F to penitrem A. This chain is Prenyl transferase ptmC, found in Penicillium ochrochloron.